The following is a 333-amino-acid chain: 4-hydroxy-3-methylbut-2-enyl diphosphate reductase (333 aa).

Cys20 lines the [4Fe-4S] cluster pocket. (2E)-4-hydroxy-3-methylbut-2-enyl diphosphate contacts are provided by His49 and His85. 2 residues coordinate dimethylallyl diphosphate: His49 and His85. Isopentenyl diphosphate-binding residues include His49 and His85. Residue Cys107 coordinates [4Fe-4S] cluster. Position 135 (His135) interacts with (2E)-4-hydroxy-3-methylbut-2-enyl diphosphate. His135 contributes to the dimethylallyl diphosphate binding site. An isopentenyl diphosphate-binding site is contributed by His135. The active-site Proton donor is Glu137. (2E)-4-hydroxy-3-methylbut-2-enyl diphosphate is bound at residue Thr176. Cys206 contributes to the [4Fe-4S] cluster binding site. Positions 234, 235, 236, and 279 each coordinate (2E)-4-hydroxy-3-methylbut-2-enyl diphosphate. Residues Ser234, Ser235, Asn236, and Ser279 each coordinate dimethylallyl diphosphate. Positions 234, 235, 236, and 279 each coordinate isopentenyl diphosphate.

Belongs to the IspH family. [4Fe-4S] cluster is required as a cofactor.

It carries out the reaction isopentenyl diphosphate + 2 oxidized [2Fe-2S]-[ferredoxin] + H2O = (2E)-4-hydroxy-3-methylbut-2-enyl diphosphate + 2 reduced [2Fe-2S]-[ferredoxin] + 2 H(+). The enzyme catalyses dimethylallyl diphosphate + 2 oxidized [2Fe-2S]-[ferredoxin] + H2O = (2E)-4-hydroxy-3-methylbut-2-enyl diphosphate + 2 reduced [2Fe-2S]-[ferredoxin] + 2 H(+). It participates in isoprenoid biosynthesis; dimethylallyl diphosphate biosynthesis; dimethylallyl diphosphate from (2E)-4-hydroxy-3-methylbutenyl diphosphate: step 1/1. The protein operates within isoprenoid biosynthesis; isopentenyl diphosphate biosynthesis via DXP pathway; isopentenyl diphosphate from 1-deoxy-D-xylulose 5-phosphate: step 6/6. Catalyzes the conversion of 1-hydroxy-2-methyl-2-(E)-butenyl 4-diphosphate (HMBPP) into a mixture of isopentenyl diphosphate (IPP) and dimethylallyl diphosphate (DMAPP). Acts in the terminal step of the DOXP/MEP pathway for isoprenoid precursor biosynthesis. The chain is 4-hydroxy-3-methylbut-2-enyl diphosphate reductase from Rhizobium johnstonii (strain DSM 114642 / LMG 32736 / 3841) (Rhizobium leguminosarum bv. viciae).